The sequence spans 569 residues: Dihydroxy-acid dehydratase (569 aa).

Cysteine 61 is a [2Fe-2S] cluster binding site. Aspartate 93 is a binding site for Mg(2+). Cysteine 134 serves as a coordination point for [2Fe-2S] cluster. 2 residues coordinate Mg(2+): aspartate 135 and lysine 136. N6-carboxylysine is present on lysine 136. Position 211 (cysteine 211) interacts with [2Fe-2S] cluster. Glutamate 462 contacts Mg(2+). The active-site Proton acceptor is the serine 488.

Belongs to the IlvD/Edd family. As to quaternary structure, homodimer. [2Fe-2S] cluster is required as a cofactor. Requires Mg(2+) as cofactor.

It catalyses the reaction (2R)-2,3-dihydroxy-3-methylbutanoate = 3-methyl-2-oxobutanoate + H2O. It carries out the reaction (2R,3R)-2,3-dihydroxy-3-methylpentanoate = (S)-3-methyl-2-oxopentanoate + H2O. It participates in amino-acid biosynthesis; L-isoleucine biosynthesis; L-isoleucine from 2-oxobutanoate: step 3/4. Its pathway is amino-acid biosynthesis; L-valine biosynthesis; L-valine from pyruvate: step 3/4. In terms of biological role, functions in the biosynthesis of branched-chain amino acids. Catalyzes the dehydration of (2R,3R)-2,3-dihydroxy-3-methylpentanoate (2,3-dihydroxy-3-methylvalerate) into 2-oxo-3-methylpentanoate (2-oxo-3-methylvalerate) and of (2R)-2,3-dihydroxy-3-methylbutanoate (2,3-dihydroxyisovalerate) into 2-oxo-3-methylbutanoate (2-oxoisovalerate), the penultimate precursor to L-isoleucine and L-valine, respectively. The polypeptide is Dihydroxy-acid dehydratase (Tropheryma whipplei (strain TW08/27) (Whipple's bacillus)).